The chain runs to 204 residues: Small ribosomal subunit protein uS4 (204 aa).

The interval 22–43 (SGKELARRPYAPGDHGNTGRRP) is disordered. The 61-residue stretch at 94-154 (TRLDSVVFRL…ERSKKIVPIL (61 aa)) folds into the S4 RNA-binding domain.

Belongs to the universal ribosomal protein uS4 family. As to quaternary structure, part of the 30S ribosomal subunit. Contacts protein S5. The interaction surface between S4 and S5 is involved in control of translational fidelity.

Its function is as follows. One of the primary rRNA binding proteins, it binds directly to 16S rRNA where it nucleates assembly of the body of the 30S subunit. Functionally, with S5 and S12 plays an important role in translational accuracy. This Oenococcus oeni (strain ATCC BAA-331 / PSU-1) protein is Small ribosomal subunit protein uS4.